The primary structure comprises 179 residues: ADP-ribosylation factor 1-like 1 (179 aa).

Gly2 carries N-myristoyl glycine lipidation. Residues 3 to 16 (LFFSKISSFMFPNI) are important for the stable binding to the membranes. Residues 24–32 (GLDGAGKTT), 126–129 (NKQD), and Ala160 each bind GTP.

The protein belongs to the small GTPase superfamily. Arf family.

The protein resides in the golgi apparatus membrane. It catalyses the reaction GTP + H2O = GDP + phosphate + H(+). With respect to regulation, alternates between an inactive GDP-bound form and an active GTP-bound form. Activated by a guanine nucleotide-exchange factor (GEF) and inactivated by GTPase-activating protein (GAP). Small GTPase involved in protein trafficking between different compartments. Modulates vesicle budding and uncoating within the Golgi complex. In its GTP-bound form, triggers the recruitment of coatomer proteins to the Golgi membrane. The hydrolysis of ARF1-bound GTP, which is mediated by ARFGAPs proteins, is required for dissociation of coat proteins from Golgi membranes and vesicles. This chain is ADP-ribosylation factor 1-like 1 (arf-1.1), found in Caenorhabditis elegans.